The following is a 144-amino-acid chain: Large ribosomal subunit protein uL15 (144 aa).

Positions 1–54 are disordered; sequence MRLNTLSPAEGSKKAGKRLGRGIGSGLGKTGGRGHKGQNSRSGGGVRRGFEGGQ. The span at 21–31 shows a compositional bias: gly residues; sequence RGIGSGLGKTG.

This sequence belongs to the universal ribosomal protein uL15 family. Part of the 50S ribosomal subunit.

Binds to the 23S rRNA. The protein is Large ribosomal subunit protein uL15 of Enterobacter sp. (strain 638).